A 644-amino-acid polypeptide reads, in one-letter code: Threonine--tRNA ligase (644 aa).

One can recognise a TGS domain in the interval 1–61 (MKVSIEGSVV…TACETLEPVY (61 aa)). The catalytic stretch occupies residues 241–532 (DHRKLGTQLD…LTEHFAGAFP (292 aa)). Zn(2+) is bound by residues cysteine 333, histidine 384, and histidine 509.

This sequence belongs to the class-II aminoacyl-tRNA synthetase family. As to quaternary structure, homodimer. Zn(2+) is required as a cofactor.

The protein resides in the cytoplasm. The enzyme catalyses tRNA(Thr) + L-threonine + ATP = L-threonyl-tRNA(Thr) + AMP + diphosphate + H(+). In terms of biological role, catalyzes the attachment of threonine to tRNA(Thr) in a two-step reaction: L-threonine is first activated by ATP to form Thr-AMP and then transferred to the acceptor end of tRNA(Thr). Also edits incorrectly charged L-seryl-tRNA(Thr). The sequence is that of Threonine--tRNA ligase from Oleidesulfovibrio alaskensis (strain ATCC BAA-1058 / DSM 17464 / G20) (Desulfovibrio alaskensis).